Consider the following 457-residue polypeptide: Glutamate--tRNA ligase 2 (457 aa).

The 'HIGH' region motif lies at 8 to 18 (PSPTGYIHIGN). Positions 249–253 (GFSKR) match the 'KMSKS' region motif. An ATP-binding site is contributed by lysine 252.

Belongs to the class-I aminoacyl-tRNA synthetase family. Glutamate--tRNA ligase type 1 subfamily. Monomer.

It is found in the cytoplasm. The enzyme catalyses tRNA(Glu) + L-glutamate + ATP = L-glutamyl-tRNA(Glu) + AMP + diphosphate. Its function is as follows. Catalyzes the attachment of glutamate to tRNA(Glu) in a two-step reaction: glutamate is first activated by ATP to form Glu-AMP and then transferred to the acceptor end of tRNA(Glu). The protein is Glutamate--tRNA ligase 2 of Bartonella tribocorum (strain CIP 105476 / IBS 506).